The chain runs to 741 residues: Condensin complex subunit 2 (741 aa).

A disordered region spans residues 1–67 (MGPPGPALPA…NDDEKERLQR (67 aa)). Ser-15, Ser-25, and Ser-28 each carry phosphoserine. Thr-49 carries the post-translational modification Phosphothreonine. Phosphoserine is present on residues Ser-70, Ser-78, Ser-81, Ser-87, Ser-89, Ser-92, Ser-96, Ser-201, and Ser-233. Positions 361–377 (CGDFPDGSLGDDFDAND) are enriched in acidic residues. Residues 361 to 383 (CGDFPDGSLGDDFDANDEPDHTA) form a disordered region. Ser-432 carries the post-translational modification Phosphoserine. A disordered region spans residues 447–467 (FRPRRKQDAPSQSENKKKSTK). Lys-488 participates in a covalent cross-link: Glycyl lysine isopeptide (Lys-Gly) (interchain with G-Cter in SUMO2). A Phosphoserine modification is found at Ser-496. Thr-598 and Thr-605 each carry phosphothreonine. At Lys-637 the chain carries N6-acetyllysine.

It belongs to the CND2 (condensin subunit 2) family. In terms of assembly, component of the condensin complex, which contains the SMC2 and SMC4 heterodimer, and three non SMC subunits that probably regulate the complex: NCAPH/BRRN1, NCAPD2/CAPD2 and NCAPG. Phosphorylated by CDK1. Its phosphorylation, as well as that of NCAPD2 and NCAPG subunits, activates the condensin complex and is required for chromosome condensation. Widely expressed at low level. Expressed in proliferating cells.

It is found in the nucleus. The protein resides in the cytoplasm. It localises to the chromosome. Functionally, regulatory subunit of the condensin complex, a complex required for conversion of interphase chromatin into mitotic-like condense chromosomes. The condensin complex probably introduces positive supercoils into relaxed DNA in the presence of type I topoisomerases and converts nicked DNA into positive knotted forms in the presence of type II topoisomerases. Early in neurogenesis, may play an essential role to ensure accurate mitotic chromosome condensation in neuron stem cells, ultimately affecting neuron pool and cortex size. This chain is Condensin complex subunit 2, found in Homo sapiens (Human).